The following is a 239-amino-acid chain: Protein TrbH (239 aa).

The chain crosses the membrane as a helical span at residues 208–228 (TVVSIICLLMWICLVYIHCGI).

It localises to the cell inner membrane. The sequence is that of Protein TrbH (trbH) from Escherichia coli (strain K12).